The sequence spans 333 residues: MTTPQPSQVRVAVTQAEPVWLDLKATVDKTCSLIAEAASKGAQLVSFPECWIPGYPAWIWTRPVDQELHSRYIQNSLTVSSPEMTQICKSANENNVIVVLGFSENIHNSLYISQAIISNTGSILTTRKKIKATHMERTIFGDAFADCLDSVVETAVGRVGALSCWEHIQPLLKYHTCAQREAIHVAAWPPLFEWGGPEDESLFSMSRDGTIALARTYAIESSSFVLHTTAVISQEGVEKMRTATGAIMNMPGGGSSAIFGPDGRLLSKPLLPTEEGIIYADLEMHDIYKTKAFVDVLGHYSRPDLLWLGVGSCDRRHVKEDAEERREDRVEVL.

Positions 9–284 (VRVAVTQAEP…EGIIYADLEM (276 aa)) constitute a CN hydrolase domain. The active-site Proton acceptor is Glu-49. Residue Lys-129 is part of the active site. The active-site Nucleophile is Cys-164.

It belongs to the carbon-nitrogen hydrolase superfamily. Nitrilase family.

The enzyme catalyses a nitrile + 2 H2O = a carboxylate + NH4(+). It catalyses the reaction 4-chlorophenylacetonitrile + 2 H2O = 4-chlorophenylacetate + NH4(+). Nitrilase that hydrolyzes preferentially phenylacetonitrile, (R,S)-mandelonitrile, and 3-indolylacetonitrile. The protein is Arylacetonitrilase of Aspergillus oryzae (strain ATCC 42149 / RIB 40) (Yellow koji mold).